A 97-amino-acid polypeptide reads, in one-letter code: Exodeoxyribonuclease 7 small subunit (97 aa).

Residues 64–97 (NGQLHPAEEKGDDVSNNGVQNQGYKSQFLDGDVF) form a disordered region. A compositionally biased stretch (polar residues) spans 77 to 88 (VSNNGVQNQGYK).

It belongs to the XseB family. Heterooligomer composed of large and small subunits.

The protein resides in the cytoplasm. It carries out the reaction Exonucleolytic cleavage in either 5'- to 3'- or 3'- to 5'-direction to yield nucleoside 5'-phosphates.. Its function is as follows. Bidirectionally degrades single-stranded DNA into large acid-insoluble oligonucleotides, which are then degraded further into small acid-soluble oligonucleotides. In Limosilactobacillus fermentum (strain NBRC 3956 / LMG 18251) (Lactobacillus fermentum), this protein is Exodeoxyribonuclease 7 small subunit.